The chain runs to 479 residues: NADH-quinone oxidoreductase subunit N 2 (479 aa).

14 helical membrane passes run 4-24, 43-63, 67-87, 99-119, 121-141, 159-179, 201-221, 239-259, 267-287, 294-314, 318-338, 364-384, 401-421, and 444-464; these read FVSF…FVVT, GVLV…SGAY, AFSQ…GILS, PEYF…VSSI, VITL…MVAM, IMFG…LYGL, AVTG…VFPF, LIAS…VSLA, ATLL…IALV, LLGF…VAMD, FASA…CFVV, LAVT…FVGF, ALVV…LQIV, and ALCV…AFTI.

Belongs to the complex I subunit 2 family. NDH-1 is composed of 14 different subunits. Subunits NuoA, H, J, K, L, M, N constitute the membrane sector of the complex.

Its subcellular location is the cell inner membrane. The catalysed reaction is a quinone + NADH + 5 H(+)(in) = a quinol + NAD(+) + 4 H(+)(out). Its function is as follows. NDH-1 shuttles electrons from NADH, via FMN and iron-sulfur (Fe-S) centers, to quinones in the respiratory chain. The immediate electron acceptor for the enzyme in this species is believed to be ubiquinone. Couples the redox reaction to proton translocation (for every two electrons transferred, four hydrogen ions are translocated across the cytoplasmic membrane), and thus conserves the redox energy in a proton gradient. This chain is NADH-quinone oxidoreductase subunit N 2, found in Opitutus terrae (strain DSM 11246 / JCM 15787 / PB90-1).